The primary structure comprises 143 residues: MGKPRGLRTARKHVNHRRDQRWADKDYKKAHLGTRWKANPFGGASHAKGIVLEKVGVEAKQPNSAIRKCVRVQLIKNGKKITAFVPRDGSLNYIEENDEVLVAGFGRKGHAVGDIPGVRFKVVKVANVSLLALYKEKKERPRS.

A compositionally biased stretch (basic residues) spans 1 to 19 (MGKPRGLRTARKHVNHRRD). The tract at residues 1-23 (MGKPRGLRTARKHVNHRRDQRWA) is disordered. Position 62 is a 3-hydroxyproline (Pro-62).

Belongs to the universal ribosomal protein uS12 family. Component of the 40S small ribosomal subunit. Hydroxylation at Pro-62 affects translation termination efficiency.

The protein localises to the cytoplasm. The protein resides in the cytosol. Its subcellular location is the rough endoplasmic reticulum. In Drosophila melanogaster (Fruit fly), this protein is Small ribosomal subunit protein uS12 (RpS23).